Reading from the N-terminus, the 85-residue chain is Arminin 2b (85 aa).

The signal sequence occupies residues 1 to 18; the sequence is MKTVFAILFLAFIALTYA. Positions 19–57 are excised as a propeptide; sequence RSYEDVKEEIKNEIEKEILEDLEEESDELNDKSKEINDA. Position 82 is an alanine amide (Ala-82).

It belongs to the arminin family. Expressed in entodermal epithelium along the body column.

It is found in the secreted. The protein resides in the target cell membrane. In terms of biological role, antimicrobial peptide with a broad-spectrum antimicrobial activity. Keeps its antibacterial activity under a wide range of salt concentrations that mimic physiological conditions of human blood, which is surprising, since Hydra is an obligate freshwater animal with nearly no salt tolerance. Does not affect red blood cells. This Hydra vulgaris (Hydra) protein is Arminin 2b.